A 239-amino-acid chain; its full sequence is Small ribosomal subunit protein uS3 (239 aa).

The KH type-2 domain occupies 39–107 (IRAALMKTLK…EVLINIVEVR (69 aa)). Residues 214–239 (AQDKKMAEQDHGGGGGDRRRRDRDAA) are disordered.

It belongs to the universal ribosomal protein uS3 family. As to quaternary structure, part of the 30S ribosomal subunit. Forms a tight complex with proteins S10 and S14.

Its function is as follows. Binds the lower part of the 30S subunit head. Binds mRNA in the 70S ribosome, positioning it for translation. The polypeptide is Small ribosomal subunit protein uS3 (Methylocella silvestris (strain DSM 15510 / CIP 108128 / LMG 27833 / NCIMB 13906 / BL2)).